The sequence spans 386 residues: Nucleosome assembly protein 1-like 4 (386 aa).

The interval 1-29 is disordered; it reads MADNSFSDGVPSDSLEAAKNASNTEKLTD. Ala-2 bears the N-acetylalanine mark. Phosphoserine is present on residues Ser-5, Ser-7, and Ser-12. Polar residues predominate over residues 20–29; sequence NASNTEKLTD. Ser-49 bears the Phosphoserine mark. Residue Thr-51 is modified to Phosphothreonine. Ser-53 and Ser-54 each carry phosphoserine. Thr-58 bears the Phosphothreonine mark. At Lys-105 the chain carries N6-acetyllysine. A Phosphoserine modification is found at Ser-125. Position 146 is an N6-acetyllysine (Lys-146). Positions 265-271 match the Nuclear localization signal motif; that stretch reads IKKKQKH. Residue Ser-304 is modified to Phosphoserine. Residues 339–370 are compositionally biased toward acidic residues; that stretch reads AIEDDDNFEEGEEGEEEELEGDEEAEDDDDAE. Residues 339 to 386 form a disordered region; sequence AIEDDDNFEEGEEGEEEELEGDEEAEDDDDAEINPKKEPSQPSECKQQ.

It belongs to the nucleosome assembly protein (NAP) family. Interacts with core (H2A, H2B, H3, H4) and linker (H1) histones. Polyglutamylated and polyglycylated. These 2 modifications occur exclusively on glutamate residues and result in either polyglutamate or polyglycine chains on the gamma-carboxyl group. Both modifications can coexist on the same protein on adjacent residues, and lowering polyglycylation levels increases polyglutamylation, and reciprocally. Polyglutamylated by TTLL4. Post-translationally, phosphorylated at the G0/G1 boundary but it is not phosphorylated in S-phase. Phosphorylated protein remains in the cytoplasm in a complex with histones during the G0/G1 transition, whereas dephosphorylation triggers its transport into the nucleus at the G1/S-boundary.

It is found in the nucleus. The protein localises to the cytoplasm. In terms of biological role, acts as a histone chaperone in nucleosome assembly. This Bos taurus (Bovine) protein is Nucleosome assembly protein 1-like 4 (NAP1L4).